The primary structure comprises 374 residues: Queuine tRNA-ribosyltransferase (374 aa).

Asp89 functions as the Proton acceptor in the catalytic mechanism. Residues Asp89 to Phe93, Asp143, Gln187, and Gly214 each bind substrate. Residues Gly245 to Asp251 are RNA binding. The active-site Nucleophile is Asp264. Positions Thr269–Arg273 are RNA binding; important for wobble base 34 recognition. Positions 302, 304, 307, and 333 each coordinate Zn(2+).

It belongs to the queuine tRNA-ribosyltransferase family. As to quaternary structure, homodimer. Within each dimer, one monomer is responsible for RNA recognition and catalysis, while the other monomer binds to the replacement base PreQ1. It depends on Zn(2+) as a cofactor.

It carries out the reaction 7-aminomethyl-7-carbaguanine + guanosine(34) in tRNA = 7-aminomethyl-7-carbaguanosine(34) in tRNA + guanine. It functions in the pathway tRNA modification; tRNA-queuosine biosynthesis. Functionally, catalyzes the base-exchange of a guanine (G) residue with the queuine precursor 7-aminomethyl-7-deazaguanine (PreQ1) at position 34 (anticodon wobble position) in tRNAs with GU(N) anticodons (tRNA-Asp, -Asn, -His and -Tyr). Catalysis occurs through a double-displacement mechanism. The nucleophile active site attacks the C1' of nucleotide 34 to detach the guanine base from the RNA, forming a covalent enzyme-RNA intermediate. The proton acceptor active site deprotonates the incoming PreQ1, allowing a nucleophilic attack on the C1' of the ribose to form the product. After dissociation, two additional enzymatic reactions on the tRNA convert PreQ1 to queuine (Q), resulting in the hypermodified nucleoside queuosine (7-(((4,5-cis-dihydroxy-2-cyclopenten-1-yl)amino)methyl)-7-deazaguanosine). This is Queuine tRNA-ribosyltransferase from Shewanella sp. (strain MR-4).